The chain runs to 96 residues: Large ribosomal subunit protein uL18m (96 aa).

This sequence belongs to the universal ribosomal protein uL18 family.

It is found in the mitochondrion. The chain is Large ribosomal subunit protein uL18m (RPL18) from Reclinomonas americana.